Here is a 729-residue protein sequence, read N- to C-terminus: Cullin-6 (729 aa).

The Cullin neddylation domain occupies 659-720 (DRKYEIKACI…EQLYIRRSEN (62 aa)). A Glycyl lysine isopeptide (Lys-Gly) (interchain with G-Cter in NEDD8) cross-link involves residue Lys-673.

The protein belongs to the cullin family. In terms of assembly, probably interacts with skr-3. Post-translationally, neddylated; which enhances the ubiquitination activity of SCF-like complex.

Functionally, probable core component of cullin-based SCF-like E3 ubiquitin-protein ligase complexes which mediate the ubiquitination and subsequent proteasomal degradation of target proteins. The chain is Cullin-6 (cul-6) from Caenorhabditis elegans.